The sequence spans 2504 residues: Fatty acid synthase (2504 aa).

At M1 the chain carries N-acetylmethionine. The 406-residue stretch at 1–406 folds into the Ketosynthase family 3 (KS3) domain; that stretch reads MEEVVIAGMS…GSNVHVILQP (406 aa). An N6-acetyllysine modification is found at K59. At S63 the chain carries Phosphoserine. K70 is modified (N6-acetyllysine). C161 serves as the catalytic For beta-ketoacyl synthase activity. S207 bears the Phosphoserine mark. The For beta-ketoacyl synthase activity role is filled by H293. An N6-acetyllysine modification is found at K298. H331 (for beta-ketoacyl synthase activity) is an active-site residue. Positions 429–817 are acyl and malonyl transferases; the sequence is RTLEAVQDLL…INVNPNALFP (389 aa). K528 carries the post-translational modification N6-acetyllysine. S581 (for malonyltransferase activity) is an active-site residue. Residues 647 to 648 and F671 each bind an acyl-CoA; that span reads DT. K673 carries the post-translational modification N6-acetyllysine. Phosphoserine is present on S725. R773 is a binding site for an acyl-CoA. N6-acetyllysine is present on K790. The segment at 844–967 is N-terminal hotdog fold; that stretch reads VPVAEDFPNG…VYLWEDPNSK (124 aa). The PKS/mFAS DH domain occupies 844-1104; it reads VPVAEDFPNG…ISRLQTTATS (261 aa). H878 functions as the Proton acceptor; for dehydratase activity in the catalytic mechanism. The interval 982–1104 is C-terminal hotdog fold; that stretch reads SVSRLTQGEV…ISRLQTTATS (123 aa). At K993 the chain carries N6-acetyllysine. D1032 serves as the catalytic Proton donor; for dehydratase activity. 2 positions are modified to N6-acetyllysine: K1071 and K1276. C1464 carries the S-nitrosocysteine modification. S1577 and S1587 each carry phosphoserine. Residues 1628–1856 are enoyl reductase; that stretch reads DVPSSWTLEE…VQVREEEPEA (229 aa). Residue 1664 to 1681 participates in NADP(+) binding; that stretch reads VLIHSGSGGVGQAAISIA. K1697 carries the N6-(pyridoxal phosphate)lysine; alternate modification. The residue at position 1697 (K1697) is an N6-acetyllysine; alternate. K1764 and K1840 each carry N6-acetyllysine. The beta-ketoacyl reductase stretch occupies residues 1857–2111; that stretch reads VLPGAQPTLI…FVLAEKKAVA (255 aa). Residue 1879–1894 coordinates NADP(+); that stretch reads SYIITGGLGGFGLELA. An N6-acetyllysine modification is found at K1988. An S-nitrosocysteine modification is found at C2084. The Carrier domain occupies 2112 to 2192; that stretch reads HGDGDTQRDL…EMSSKTDSAT (81 aa). An O-(pantetheine 4'-phosphoryl)serine; alternate modification is found at S2150. The residue at position 2150 (S2150) is a Phosphoserine; alternate. A disordered region spans residues 2181–2205; sequence LQEMSSKTDSATDTTAPKSRSDTSL. Over residues 2185 to 2198 the composition is skewed to low complexity; sequence SSKTDSATDTTAPK. Phosphoserine occurs at positions 2190 and 2229. A thioesterase region spans residues 2201–2504; it reads SDTSLKQNQL…AEPRVSVREG (304 aa). S2301 (for thioesterase activity) is an active-site residue. At K2384 the chain carries N6-acetyllysine. A Glycyl lysine isopeptide (Lys-Gly) (interchain with G-Cter in SUMO2) cross-link involves residue K2442. H2474 serves as the catalytic For thioesterase activity.

As to quaternary structure, homodimer which is arranged in a head to tail fashion. Interacts with CEACAM1; this interaction is insulin and phosphorylation-dependent; reduces fatty-acid synthase activity. S-nitrosylation of Fatty acid synthase at cysteine residues Cys-1464 or Cys-2084 is important for the enzyme dimerization. In adipocytes, S-nitrosylation of Fatty acid synthase occurs under physiological conditions and gradually increases during adipogenesis.

The protein localises to the cytoplasm. The protein resides in the melanosome. The enzyme catalyses acetyl-CoA + n malonyl-CoA + 2n NADPH + 2n H(+) = a long-chain fatty acid + (n+1) CoA + n CO2 + 2n NADP(+).. It carries out the reaction holo-[ACP] + acetyl-CoA = acetyl-[ACP] + CoA. The catalysed reaction is holo-[ACP] + malonyl-CoA = malonyl-[ACP] + CoA. It catalyses the reaction a fatty acyl-[ACP] + malonyl-[ACP] + H(+) = a 3-oxoacyl-[ACP] + holo-[ACP] + CO2. The enzyme catalyses a (3R)-hydroxyacyl-[ACP] + NADP(+) = a 3-oxoacyl-[ACP] + NADPH + H(+). It carries out the reaction a (3R)-hydroxyacyl-[ACP] = a (2E)-enoyl-[ACP] + H2O. The catalysed reaction is a 2,3-saturated acyl-[ACP] + NADP(+) = a (2E)-enoyl-[ACP] + NADPH + H(+). It catalyses the reaction hexadecanoyl-[ACP] + H2O = hexadecanoate + holo-[ACP] + H(+). The enzyme catalyses acetyl-[ACP] + malonyl-[ACP] + H(+) = 3-oxobutanoyl-[ACP] + holo-[ACP] + CO2. It carries out the reaction 3-oxobutanoyl-[ACP] + NADPH + H(+) = (3R)-hydroxybutanoyl-[ACP] + NADP(+). The catalysed reaction is (3R)-hydroxybutanoyl-[ACP] = (2E)-butenoyl-[ACP] + H2O. It catalyses the reaction (2E)-butenoyl-[ACP] + NADPH + H(+) = butanoyl-[ACP] + NADP(+). The enzyme catalyses butanoyl-[ACP] + malonyl-[ACP] + H(+) = 3-oxohexanoyl-[ACP] + holo-[ACP] + CO2. It carries out the reaction 3-oxohexanoyl-[ACP] + NADPH + H(+) = (3R)-hydroxyhexanoyl-[ACP] + NADP(+). The catalysed reaction is (3R)-hydroxyhexanoyl-[ACP] = (2E)-hexenoyl-[ACP] + H2O. It catalyses the reaction (2E)-hexenoyl-[ACP] + NADPH + H(+) = hexanoyl-[ACP] + NADP(+). The enzyme catalyses hexanoyl-[ACP] + malonyl-[ACP] + H(+) = 3-oxooctanoyl-[ACP] + holo-[ACP] + CO2. It carries out the reaction 3-oxooctanoyl-[ACP] + NADPH + H(+) = (3R)-hydroxyoctanoyl-[ACP] + NADP(+). The catalysed reaction is (3R)-hydroxyoctanoyl-[ACP] = (2E)-octenoyl-[ACP] + H2O. It catalyses the reaction (2E)-octenoyl-[ACP] + NADPH + H(+) = octanoyl-[ACP] + NADP(+). The enzyme catalyses octanoyl-[ACP] + malonyl-[ACP] + H(+) = 3-oxodecanoyl-[ACP] + holo-[ACP] + CO2. It carries out the reaction 3-oxodecanoyl-[ACP] + NADPH + H(+) = (3R)-hydroxydecanoyl-[ACP] + NADP(+). The catalysed reaction is (3R)-hydroxydecanoyl-[ACP] = (2E)-decenoyl-[ACP] + H2O. It catalyses the reaction (2E)-decenoyl-[ACP] + NADPH + H(+) = decanoyl-[ACP] + NADP(+). The enzyme catalyses decanoyl-[ACP] + malonyl-[ACP] + H(+) = 3-oxododecanoyl-[ACP] + holo-[ACP] + CO2. It carries out the reaction 3-oxododecanoyl-[ACP] + NADPH + H(+) = (3R)-hydroxydodecanoyl-[ACP] + NADP(+). The catalysed reaction is (3R)-hydroxydodecanoyl-[ACP] = (2E)-dodecenoyl-[ACP] + H2O. It catalyses the reaction (2E)-dodecenoyl-[ACP] + NADPH + H(+) = dodecanoyl-[ACP] + NADP(+). The enzyme catalyses dodecanoyl-[ACP] + malonyl-[ACP] + H(+) = 3-oxotetradecanoyl-[ACP] + holo-[ACP] + CO2. It carries out the reaction 3-oxotetradecanoyl-[ACP] + NADPH + H(+) = (3R)-hydroxytetradecanoyl-[ACP] + NADP(+). The catalysed reaction is (3R)-hydroxytetradecanoyl-[ACP] = (2E)-tetradecenoyl-[ACP] + H2O. It catalyses the reaction (2E)-tetradecenoyl-[ACP] + NADPH + H(+) = tetradecanoyl-[ACP] + NADP(+). The enzyme catalyses tetradecanoyl-[ACP] + malonyl-[ACP] + H(+) = 3-oxohexadecanoyl-[ACP] + holo-[ACP] + CO2. It carries out the reaction 3-oxohexadecanoyl-[ACP] + NADPH + H(+) = (3R)-hydroxyhexadecanoyl-[ACP] + NADP(+). The catalysed reaction is (3R)-hydroxyhexadecanoyl-[ACP] = (2E)-hexadecenoyl-[ACP] + H2O. It catalyses the reaction (2E)-hexadecenoyl-[ACP] + NADPH + H(+) = hexadecanoyl-[ACP] + NADP(+). The enzyme catalyses hexadecanoyl-[ACP] + malonyl-[ACP] + H(+) = 3-oxooctadecanoyl-[ACP] + holo-[ACP] + CO2. It carries out the reaction 3-oxooctadecanoyl-[ACP] + NADPH + H(+) = (3R)-hydroxyoctadecanoyl-[ACP] + NADP(+). The catalysed reaction is (3R)-hydroxyoctadecanoyl-[ACP] = (2E)-octadecenoyl-[ACP] + H2O. It catalyses the reaction (2E)-octadecenoyl-[ACP] + NADPH + H(+) = octadecanoyl-[ACP] + NADP(+). The enzyme catalyses tetradecanoyl-[ACP] + H2O = tetradecanoate + holo-[ACP] + H(+). It functions in the pathway lipid metabolism; fatty acid biosynthesis. Functionally, fatty acid synthetase is a multifunctional enzyme that catalyzes the de novo biosynthesis of long-chain saturated fatty acids starting from acetyl-CoA and malonyl-CoA in the presence of NADPH. This multifunctional protein contains 7 catalytic activities and a site for the binding of the prosthetic group 4'-phosphopantetheine of the acyl carrier protein ([ACP]) domain. The sequence is that of Fatty acid synthase (Fasn) from Mus musculus (Mouse).